Here is a 68-residue protein sequence, read N- to C-terminus: Large ribosomal subunit protein bL35 (68 aa).

Belongs to the bacterial ribosomal protein bL35 family.

This is Large ribosomal subunit protein bL35 from Orientia tsutsugamushi (strain Boryong) (Rickettsia tsutsugamushi).